A 330-amino-acid chain; its full sequence is Phosphate acyltransferase (330 aa).

It belongs to the PlsX family. Homodimer. Probably interacts with PlsY.

The protein localises to the cytoplasm. The catalysed reaction is a fatty acyl-[ACP] + phosphate = an acyl phosphate + holo-[ACP]. It functions in the pathway lipid metabolism; phospholipid metabolism. In terms of biological role, catalyzes the reversible formation of acyl-phosphate (acyl-PO(4)) from acyl-[acyl-carrier-protein] (acyl-ACP). This enzyme utilizes acyl-ACP as fatty acyl donor, but not acyl-CoA. In Streptococcus pneumoniae (strain 70585), this protein is Phosphate acyltransferase.